Reading from the N-terminus, the 518-residue chain is Cell wall biosynthesis protein LcpA (518 aa).

The Cytoplasmic segment spans residues 1–31 (MTEKYRPVRDIKPAPAAMQSTKQAGHPVFRS). The chain crosses the membrane as a helical span at residues 32–52 (VVAFVSVLVLLVSGLGYLAVG). Residues 53–518 (KVDGVASGNL…AGGDGPRCVN (466 aa)) lie on the Periplasmic side of the membrane. The disordered stretch occupies residues 485-518 (AVTSSTVGQPGADVGEPIESPEFDAGGDGPRCVN).

Belongs to the LytR/CpsA/Psr (LCP) family. Forms homodimers and homotetramers.

The protein localises to the cell inner membrane. Its function is as follows. Involved in cell wall biosynthesis. May be responsible for the transfer of arabinogalactan onto peptidoglycan. In vitro, has pyrophosphatase activity. This Corynebacterium glutamicum (strain ATCC 13032 / DSM 20300 / JCM 1318 / BCRC 11384 / CCUG 27702 / LMG 3730 / NBRC 12168 / NCIMB 10025 / NRRL B-2784 / 534) protein is Cell wall biosynthesis protein LcpA.